Consider the following 406-residue polypeptide: MPSPRREDGDALRCGDRSAAVTEIRAALTALGMLDHQEEDLTTGRNVALELFDAQLDQAVRAFQQHRGLLVDGIVGEATYRALKEASYRLGARTLYHQFGAPLYGDDVATLQARLQDLGFYTGLVDGHFGLQTHNALMSYQREYGLAADGICGPETLRSLYFLSSRVSGGSPHAIREEELVRSSGPKLSGKRIIIDPGRGGVDHGLIAQGPAGPISEADLLWDLASRLEGRMAAIGMETHLSRPTNRSPSDAERAATANAVGADLMISLRCETQTSLAANGVASFHFGNSHGSVSTIGRNLADFIQREVVARTGLRDCRVHGRTWDLLRLTRMPTVQVDIGYITNPHDRGMLVSTQTRDAIAEGILAAVKRLYLLGKNDRPTGTFTFAELLAHELSVERAGRLGGS.

2 peptidoglycan-binding domain regions span residues 18 to 83 (SAAV…YRAL) and 105 to 160 (GDDV…LRSL). Residues 193-370 (IIIDPGRGGV…IAEGILAAVK (178 aa)) form the MurNAc-LAA domain.

This sequence belongs to the N-acetylmuramoyl-L-alanine amidase 3 family.

Its subcellular location is the periplasm. The enzyme catalyses Hydrolyzes the link between N-acetylmuramoyl residues and L-amino acid residues in certain cell-wall glycopeptides.. It functions in the pathway cell wall degradation; peptidoglycan degradation. Cell-wall hydrolase that hydrolyzes the amide bond between N-acetylmuramic acid and L-alanine in cell-wall glycopeptides. Is able to lyse whole mycobacteria, release peptidoglycan from the cell wall of M.luteus and M.smegmatis, and cleave N-acetylmuramoyl-L-alanyl-D-isoglutamine, releasing free N-acetylmuramic acid and dipeptide. This Mycobacterium tuberculosis (strain ATCC 25618 / H37Rv) protein is N-acetylmuramoyl-L-alanine amidase CwlM.